The chain runs to 1030 residues: Beta-galactosidase (1030 aa).

Substrate-binding residues include N99 and D197. D197 contacts Na(+). E411, H413, and E456 together coordinate Mg(2+). Residues E456 and 532–535 (EYAH) contribute to the substrate site. E456 (proton donor) is an active-site residue. E532 (nucleophile) is an active-site residue. N592 is a binding site for Mg(2+). Residues F596 and N599 each contribute to the Na(+) site. Residues N599 and W1004 each coordinate substrate.

The protein belongs to the glycosyl hydrolase 2 family. As to quaternary structure, homotetramer. Mg(2+) is required as a cofactor. It depends on Na(+) as a cofactor.

It carries out the reaction Hydrolysis of terminal non-reducing beta-D-galactose residues in beta-D-galactosides.. In Photobacterium profundum (strain SS9), this protein is Beta-galactosidase.